The sequence spans 168 residues: Large ribosomal subunit protein uL11 (168 aa).

The protein belongs to the universal ribosomal protein uL11 family. Part of the ribosomal stalk of the 50S ribosomal subunit. Interacts with L10 and the large rRNA to form the base of the stalk. L10 forms an elongated spine to which L12 dimers bind in a sequential fashion forming a multimeric L10(L12)X complex.

Its function is as follows. Forms part of the ribosomal stalk which helps the ribosome interact with GTP-bound translation factors. This is Large ribosomal subunit protein uL11 from Metallosphaera sedula (strain ATCC 51363 / DSM 5348 / JCM 9185 / NBRC 15509 / TH2).